The following is a 393-amino-acid chain: Formate-dependent phosphoribosylglycinamide formyltransferase (393 aa).

Residues 22–23 (EL) and Glu-82 each bind N(1)-(5-phospho-beta-D-ribosyl)glycinamide. ATP is bound by residues Arg-114, Lys-155, 160 to 165 (SSGHGQ), 195 to 198 (EGFV), and Glu-203. Residues 119–308 (RLAAEELGLP…EFALHARAIL (190 aa)) enclose the ATP-grasp domain. Mg(2+) contacts are provided by Glu-267 and Glu-279. Residues Asp-286, Lys-356, and 363–364 (RR) each bind N(1)-(5-phospho-beta-D-ribosyl)glycinamide.

It belongs to the PurK/PurT family. In terms of assembly, homodimer.

It carries out the reaction N(1)-(5-phospho-beta-D-ribosyl)glycinamide + formate + ATP = N(2)-formyl-N(1)-(5-phospho-beta-D-ribosyl)glycinamide + ADP + phosphate + H(+). It functions in the pathway purine metabolism; IMP biosynthesis via de novo pathway; N(2)-formyl-N(1)-(5-phospho-D-ribosyl)glycinamide from N(1)-(5-phospho-D-ribosyl)glycinamide (formate route): step 1/1. In terms of biological role, involved in the de novo purine biosynthesis. Catalyzes the transfer of formate to 5-phospho-ribosyl-glycinamide (GAR), producing 5-phospho-ribosyl-N-formylglycinamide (FGAR). Formate is provided by PurU via hydrolysis of 10-formyl-tetrahydrofolate. This is Formate-dependent phosphoribosylglycinamide formyltransferase from Mannheimia succiniciproducens (strain KCTC 0769BP / MBEL55E).